Consider the following 220-residue polypeptide: MTHSPDLKGSSFTLSVLHLSDNEIANTVEFLQEKVSQAPSFFASAPLVINIAKVQGDIDFPALKQGIADAGFIPVGITGSKDKRVQNLASEAGFAIMSASKSPSQAPAKMAPTKVVRTPVRSGQQIYAKDGDLVVLAHVSAGAEVIADGSIHIHGTLRGRAIAGASGQQEARIICHDLQAELVSIAGDYWLSDQIESEYWQKKVMISKAEESLHLEVLAI.

The protein belongs to the MinC family. Interacts with MinD and FtsZ.

Functionally, cell division inhibitor that blocks the formation of polar Z ring septums. Rapidly oscillates between the poles of the cell to destabilize FtsZ filaments that have formed before they mature into polar Z rings. Prevents FtsZ polymerization. This chain is Probable septum site-determining protein MinC, found in Vibrio parahaemolyticus serotype O3:K6 (strain RIMD 2210633).